A 160-amino-acid polypeptide reads, in one-letter code: Putative UPF0479 protein YIL177W-A (160 aa).

The next 2 helical transmembrane spans lie at 39–59 and 136–156; these read IVFC…KVLQ and VPMI…ISQH.

The protein belongs to the UPF0479 family.

It is found in the membrane. This Saccharomyces cerevisiae (strain ATCC 204508 / S288c) (Baker's yeast) protein is Putative UPF0479 protein YIL177W-A.